The chain runs to 401 residues: Argininosuccinate synthase (401 aa).

8–16 (AYSGGLDTS) is a binding site for ATP. Residue Tyr85 participates in L-citrulline binding. Gly115 contacts ATP. L-aspartate is bound by residues Thr117, Asn121, and Asp122. Asn121 contacts L-citrulline. Residues Arg125, Ser173, Ser182, Glu258, and Tyr270 each contribute to the L-citrulline site.

The protein belongs to the argininosuccinate synthase family. Type 1 subfamily. As to quaternary structure, homotetramer.

The protein localises to the cytoplasm. It carries out the reaction L-citrulline + L-aspartate + ATP = 2-(N(omega)-L-arginino)succinate + AMP + diphosphate + H(+). The protein operates within amino-acid biosynthesis; L-arginine biosynthesis; L-arginine from L-ornithine and carbamoyl phosphate: step 2/3. This chain is Argininosuccinate synthase, found in Staphylococcus saprophyticus subsp. saprophyticus (strain ATCC 15305 / DSM 20229 / NCIMB 8711 / NCTC 7292 / S-41).